Consider the following 193-residue polypeptide: Large ribosomal subunit protein uL18 (193 aa).

This sequence belongs to the universal ribosomal protein uL18 family. In terms of assembly, part of the 50S ribosomal subunit. Contacts the 5S and 23S rRNAs.

Its function is as follows. This is one of the proteins that bind and probably mediate the attachment of the 5S RNA into the large ribosomal subunit, where it forms part of the central protuberance. The protein is Large ribosomal subunit protein uL18 of Methanococcus vannielii (strain ATCC 35089 / DSM 1224 / JCM 13029 / OCM 148 / SB).